A 1482-amino-acid chain; its full sequence is Cystic fibrosis transmembrane conductance regulator (1482 aa).

The Cytoplasmic portion of the chain corresponds to 1–77; it reads MQRSPLEKAS…KLINALRRCF (77 aa). A helical transmembrane segment spans residues 78–98; the sequence is FWRFTFYGIILYLGEVTKAVQ. One can recognise an ABC transmembrane type-1 1 domain in the interval 81–365; it reads FTFYGIILYL…WAVQTWYDSL (285 aa). The Extracellular portion of the chain corresponds to 99 to 122; sequence PLLLGRIIASYDPDNKVERSIAIY. Residues 123–146 form a helical membrane-spanning segment; it reads LAVGLCLLFVVRTLLLHPAIFGLH. Residues 147 to 195 lie on the Cytoplasmic side of the membrane; the sequence is HIGMQMRIAMFSLIYKKTLKLSSRVLDKISIGQLVSLLSNNLNKFDEGL. Residues 196 to 216 traverse the membrane as a helical segment; it reads ALAHFVWIAPLQVTLLMGLLW. Topologically, residues 217-222 are extracellular; sequence DLLQAS. A helical membrane pass occupies residues 223 to 243; that stretch reads AFSGLGVLIILACFQAGFGRM. Residues 244–298 lie on the Cytoplasmic side of the membrane; sequence MMKYRDQRAGKINERLVITSEMIENIQSVKAYCWEEALEKMIENFRQSELRLTRK. The helical transmembrane segment at 299-319 threads the bilayer; it reads AAYVRYFNSSAFFFSGFFVVF. Topologically, residues 320 to 339 are extracellular; the sequence is LSVLPYALIKGIILRKIFTT. Residues 340–358 form a helical membrane-spanning segment; it reads ISFCIVLRMAVTRQFPWAV. The Cytoplasmic segment spans residues 359 to 859; it reads QTWYDSLGAI…YLRYITVHKR (501 aa). ATP contacts are provided by residues Trp-401, Ser-434, 458–465, and Gln-493; that span reads GSTGAGKT. The region spanning 423 to 646 is the ABC transporter 1 domain; that stretch reads NVDNSLFFSN…RPDFSSKLMG (224 aa). Cys-524 carries S-palmitoyl cysteine lipidation. 2 positions are modified to phosphoserine: Ser-549 and Ser-660. The interval 654-832 is disordered R region; the sequence is SAERRNSIIT…EEINEEDLKE (179 aa). A Phosphoserine; by PKA modification is found at Ser-670. At Ser-686 the chain carries Phosphoserine. Lys-688 participates in a covalent cross-link: Glycyl lysine isopeptide (Lys-Gly) (interchain with G-Cter in ubiquitin). Phosphoserine is present on residues Ser-700 and Ser-712. A Phosphothreonine modification is found at Thr-717. Ser-737, Ser-768, Ser-796, and Ser-814 each carry phosphoserine. Residues 860–880 traverse the membrane as a helical segment; sequence LIFVLIWCFVVFLIEVAASLV. An ABC transmembrane type-1 2 domain is found at 860-1156; the sequence is LIFVLIWCFV…AVNSSIDVDS (297 aa). Residues 881 to 919 are Extracellular-facing; the sequence is LLCLLSKVSPEDKGNTTKSANDSSAVIITSTSSFYFLYI. 2 N-linked (GlcNAc...) asparagine glycosylation sites follow: Asn-895 and Asn-901. A discontinuously helical transmembrane segment spans residues 920-940; the sequence is YVGVADTFLALGLFRGLPLVH. Over 941–991 the chain is Cytoplasmic; that stretch reads TLITVSKILHHKMLHSVLQAPMSTLNTLKAGGILNRFSKDIAILDDLLPLT. A helical membrane pass occupies residues 992–1012; the sequence is IFDFIQLLLIVIGAVAVVSIL. The Extracellular segment spans residues 1013 to 1014; that stretch reads KP. The chain crosses the membrane as a helical span at residues 1015–1035; it reads YIFLATVPVIVAFVLLRAYFL. At 1036–1096 the chain is on the cytoplasmic side; sequence HTSQQLKQLE…TANWFLYLST (61 aa). The chain crosses the membrane as a helical span at residues 1097 to 1117; it reads LRWFQMRIEMIFVIFFIAVTF. Residues 1118–1131 are Extracellular-facing; sequence ISILTTGEGEGTVG. A helical membrane pass occupies residues 1132 to 1152; it reads IILTLAMNIMSTLQWAVNSSI. Over 1153 to 1482 the chain is Cytoplasmic; the sequence is DVDSLMRSVS…TEEEVQDTRL (330 aa). Residues 1212 to 1445 enclose the ABC transporter 2 domain; it reads MTVKDLTAKY…KSLFRQAISP (234 aa). ATP is bound by residues Tyr-1221 and 1246–1253; that span reads GRTGSGKS. The interval 1388–1482 is interaction with GORASP2; sequence RTLKQAFADC…TEEEVQDTRL (95 aa). Cys-1397 carries S-palmitoyl cysteine lipidation. Ser-1446 is modified (phosphoserine). A disordered region spans residues 1450–1482; the sequence is KLFPHQNSGKHKSRSKITALKEETEEEVQDTRL. Over residues 1472–1482 the composition is skewed to acidic residues; sequence ETEEEVQDTRL. Positions 1480–1482 match the PDZ-binding motif; the sequence is TRL.

It belongs to the ABC transporter superfamily. ABCC family. CFTR transporter (TC 3.A.1.202) subfamily. As to quaternary structure, monomer; does not require oligomerization for channel activity. May form oligomers in the membrane. Interacts with SLC26A3, SLC26A6 and NHERF1. Interacts with SHANK2. Interacts with MYO6. Interacts (via C-terminus) with GOPC (via PDZ domain); this promotes CFTR internalization and thereby decreases channel activity. Interacts with SLC4A7 through NHERF1. Found in a complex with MYO5B and RAB11A. Interacts with ANO1. Interacts with SLC26A8. Interacts with AHCYL1; the interaction increases CFTR activity. Interacts with CSE1L. The core-glycosylated form interacts with GORASP2 (via PDZ GRASP-type 1 domain) in respone to ER stress. Interacts with MARCHF2; the interaction leads to CFTR ubiqtuitination and degradation. Interacts with ADGRG2. In terms of processing, N-glycosylated. Post-translationally, phosphorylated; cAMP treatment promotes phosphorylation and activates the channel. Dephosphorylation decreases the ATPase activity (in vitro). Phosphorylation at PKA sites activates the channel. Phosphorylation at PKC sites enhances the response to phosphorylation by PKA. Phosphorylated by AMPK; this inhibits channel activity. Ubiquitinated, leading to its degradation in the lysosome. Deubiquitination by USP10 in early endosomes enhances its endocytic recycling to the cell membrane. Ubiquitinated by RNF185 during ER stress. Ubiquitinated by MARCHF2.

It localises to the apical cell membrane. It is found in the early endosome membrane. The protein resides in the cell membrane. The protein localises to the recycling endosome membrane. Its subcellular location is the endoplasmic reticulum membrane. It localises to the nucleus. It catalyses the reaction ATP + H2O + closed Cl(-) channel = ADP + phosphate + open Cl(-) channel.. It carries out the reaction chloride(in) = chloride(out). The catalysed reaction is hydrogencarbonate(in) = hydrogencarbonate(out). The enzyme catalyses ATP + H2O = ADP + phosphate + H(+). Its function is as follows. Epithelial ion channel that plays an important role in the regulation of epithelial ion and water transport and fluid homeostasis. Mediates the transport of chloride ions across the cell membrane. Possesses an intrinsic ATPase activity and utilizes ATP to gate its channel; the passive flow of anions through the channel is gated by cycles of ATP binding and hydrolysis by the ATP-binding domains. The ion channel is also permeable to HCO(3)(-); selectivity depends on the extracellular chloride concentration. Exerts its function also by modulating the activity of other ion channels and transporters. Contributes to the regulation of the pH and the ion content of the epithelial fluid layer. Modulates the activity of the epithelial sodium channel (ENaC) complex, in part by regulating the cell surface expression of the ENaC complex. May regulate bicarbonate secretion and salvage in epithelial cells by regulating the transporter SLC4A7. Can inhibit the chloride channel activity of ANO1. Plays a role in the chloride and bicarbonate homeostasis during sperm epididymal maturation and capacitation. The protein is Cystic fibrosis transmembrane conductance regulator of Dasypus novemcinctus (Nine-banded armadillo).